A 184-amino-acid chain; its full sequence is uncharacterized protein (184 aa).

The segment at 32-52 (PCPRSRTQGQSRRSETHTISR) is disordered.

The protein resides in the mitochondrion. This is an uncharacterized protein from Arabidopsis thaliana (Mouse-ear cress).